We begin with the raw amino-acid sequence, 292 residues long: MIQRPTFFTPTHLLAMLLATFVLITGCHREAKKNADDGMPVEHLYDKAHTLMKKGNWAGAEVSFKRLIAQYPYGPYTEQAMVENAYAQYKSGKHDDAVSSIDRFIRTYPTHHNIPYLYYLRGLSNSNRDTIFLRKVWSLDLSRRDLSAPQQAYNDFKTVLDRYPNSRYAADAKKQMTELRNMFAQYEMNVTLYYLRRTAWVAAAGRANFLLETYPQSAFQYDAVAALGEAYTHLGNKTLADNARQVLQTNAPDHPWLKGKWPKYPAAIRKLNPFAGEKSAATGQINAVVDSN.

A signal peptide spans 1–26 (MIQRPTFFTPTHLLAMLLATFVLITG). Cys27 is lipidated: N-palmitoyl cysteine. A lipid anchor (S-diacylglycerol cysteine) is attached at Cys27.

Belongs to the BamD family. Part of the Bam complex.

The protein localises to the cell outer membrane. Functionally, part of the outer membrane protein assembly complex, which is involved in assembly and insertion of beta-barrel proteins into the outer membrane. The sequence is that of Outer membrane protein assembly factor BamD from Xylella fastidiosa (strain 9a5c).